A 197-amino-acid polypeptide reads, in one-letter code: ADP-ribosylation factor-like protein 6-interacting protein 1 (197 aa).

4 helical membrane passes run 43–63 (VVFG…LSLI), 64–84 (TLLS…PMVS), 129–149 (TVFV…GAII), and 150–170 (NNLL…GLQN).

This sequence belongs to the ARL6ip family.

Its subcellular location is the membrane. This Drosophila melanogaster (Fruit fly) protein is ADP-ribosylation factor-like protein 6-interacting protein 1.